The following is a 205-amino-acid chain: LexA repressor (205 aa).

Positions 28–48 (RAEIAHKLGFRSANSAEEHLK) form a DNA-binding region, H-T-H motif. Residues S122 and K159 each act as for autocatalytic cleavage activity in the active site.

Belongs to the peptidase S24 family. In terms of assembly, homodimer.

It catalyses the reaction Hydrolysis of Ala-|-Gly bond in repressor LexA.. Its function is as follows. Represses a number of genes involved in the response to DNA damage (SOS response), including recA and lexA. In the presence of single-stranded DNA, RecA interacts with LexA causing an autocatalytic cleavage which disrupts the DNA-binding part of LexA, leading to derepression of the SOS regulon and eventually DNA repair. The polypeptide is LexA repressor (Idiomarina loihiensis (strain ATCC BAA-735 / DSM 15497 / L2-TR)).